We begin with the raw amino-acid sequence, 237 residues long: Ribonuclease 3 (237 aa).

An RNase III domain is found at 7 to 135 (IKEVEAKLKF…ILGAVYLDGG (129 aa)). E48 contacts Mg(2+). Residue D52 is part of the active site. Positions 121 and 124 each coordinate Mg(2+). The active site involves E124. In terms of domain architecture, DRBM spans 160–229 (NPKNRLQQLT…AQEALDANDY (70 aa)).

It belongs to the ribonuclease III family. As to quaternary structure, homodimer. The cofactor is Mg(2+).

The protein localises to the cytoplasm. The enzyme catalyses Endonucleolytic cleavage to 5'-phosphomonoester.. In terms of biological role, digests double-stranded RNA. Involved in the processing of primary rRNA transcript to yield the immediate precursors to the large and small rRNAs (23S and 16S). Processes some mRNAs, and tRNAs when they are encoded in the rRNA operon. Processes pre-crRNA and tracrRNA of type II CRISPR loci if present in the organism. This Chlamydia felis (strain Fe/C-56) (Chlamydophila felis) protein is Ribonuclease 3.